A 546-amino-acid polypeptide reads, in one-letter code: MSAPQQQQQSQQKQQQHVRVVEQQQVEPAEAVTSSMESESISASKELTGLTHECGVFGAIACGDWPTQMDIAHVICLGLVALQHRGQESAGIATSEGKCSKNFNVHKGMGMISTLFNDDSMKKLRGNLGIGHTRYSTAGGSGVVNCQPFEVHTTHGALALAHNGELVNNESLRREVLARGVGLSTHSDSELIAQSLCCAPEDVSELDGPNWPARIRHFMMLAPLSYSLVIMLKDKIYAVRDTYGNRPLCIGKIVPINAGHGNNLDTPADGWVVSSESCGFLSIGARYVREVEPGEIVELSRSGYRTVDIVERPDFKRMAFCIFEYVYFARGDSIFEGQMVYTVRLQCGRQLWREAPVEADIVSSVPESGTAAAHGYARESGIEFAEVLCRNRYVGRTFIQPSTRLRQLGVAKKFGALSENVAGKRLVLIDDSIVRGNTIGPIIKLLRDAGAREVHIRIASPPLQYPCYMGINIPTREELIANKLNPDQLARHVGADSLAYLSVEGLVEAVQLKHRDAGDSKSKGTGHCTACLTGEYPGGLPDELSW.

A compositionally biased stretch (low complexity) spans 1-26; that stretch reads MSAPQQQQQSQQKQQQHVRVVEQQQV. The tract at residues 1-39 is disordered; sequence MSAPQQQQQSQQKQQQHVRVVEQQQVEPAEAVTSSMESE. A propeptide spanning residues 1 to 53 is cleaved from the precursor; that stretch reads MSAPQQQQQSQQKQQQHVRVVEQQQVEPAEAVTSSMESESISASKELTGLTHE. The active-site Nucleophile is Cys-54. The Glutamine amidotransferase type-2 domain maps to 54–302; it reads CGVFGAIACG…PGEIVELSRS (249 aa). Phosphoserine is present on Ser-113. At Thr-114 the chain carries Phosphothreonine. Ser-120 carries the phosphoserine modification. Residue Cys-321 coordinates [4Fe-4S] cluster. Ser-368, Asp-430, and Asp-431 together coordinate Mg(2+). [4Fe-4S] cluster contacts are provided by Cys-467, Cys-528, and Cys-531.

It in the C-terminal section; belongs to the purine/pyrimidine phosphoribosyltransferase family. Mg(2+) is required as a cofactor. It depends on [4Fe-4S] cluster as a cofactor.

It carries out the reaction 5-phospho-beta-D-ribosylamine + L-glutamate + diphosphate = 5-phospho-alpha-D-ribose 1-diphosphate + L-glutamine + H2O. The protein operates within purine metabolism; IMP biosynthesis via de novo pathway; N(1)-(5-phospho-D-ribosyl)glycinamide from 5-phospho-alpha-D-ribose 1-diphosphate: step 1/2. Involved in the first step (and regulatory point) of the de novo biosynthesis of purine nucleotides, where it catalyzes the transfer of glutamine amide to 5-phospho-alpha-D-ribose 1-diphosphate. The chain is Amidophosphoribosyltransferase (Prat) from Drosophila melanogaster (Fruit fly).